The sequence spans 85 residues: MERKRYSKRYCKYTEAKISFIDYKDLDMLKHTLSERYKIMPRRLTGNSKKWQERVEVAIKRARHMALIPYIVDRKKVVDSPFKQH.

It belongs to the bacterial ribosomal protein bS18 family. As to quaternary structure, part of the 30S ribosomal subunit. Forms a tight heterodimer with protein bS6.

Functionally, binds as a heterodimer with protein bS6 to the central domain of the 16S rRNA, where it helps stabilize the platform of the 30S subunit. The protein is Small ribosomal subunit protein bS18 of Helicobacter pylori (strain P12).